Here is a 109-residue protein sequence, read N- to C-terminus: MSDTSVDASVEKTTKDLKSKDKELVEETENGKDKPANGNAENEENGEDGADNEEEEEVDEEDEEDEGEGDDDEGDEDDEADGATGKRAAEDDDEDDDVDAKKQKTDDDD.

A disordered region spans residues 1-109; sequence MSDTSVDASV…AKKQKTDDDD (109 aa). The span at 9–35 shows a compositional bias: basic and acidic residues; it reads SVEKTTKDLKSKDKELVEETENGKDKP. Acidic residues predominate over residues 41-81; it reads ENEENGEDGADNEEEEEVDEEDEEDEGEGDDDEGDEDDEAD. A compositionally biased stretch (basic and acidic residues) spans 99–109; it reads DAKKQKTDDDD.

This sequence belongs to the pro/parathymosin family. In terms of tissue distribution, highly expressed in the testis.

The protein localises to the nucleus. May have role in testicular activity. This chain is Prothymosin alpha, found in Pelophylax lessonae (Pool frog).